A 429-amino-acid polypeptide reads, in one-letter code: Metacaspase-1A (429 aa).

A disordered region spans residues 1–68; it reads MQHHHQGSYG…PQHNGGQMYG (68 aa). Positions 8–19 are enriched in gly residues; the sequence is SYGGGGGGGGYP. Low complexity predominate over residues 20-45; that stretch reads GQAYREQNPYGYGQQSPQQGYGAPQQ. Over residues 46-62 the composition is skewed to polar residues; that stretch reads HNGYNQPPSGYGQPQHN. Catalysis depends on residues H220 and C276.

It belongs to the peptidase C14B family.

Involved in cell death (apoptosis). This Aspergillus clavatus (strain ATCC 1007 / CBS 513.65 / DSM 816 / NCTC 3887 / NRRL 1 / QM 1276 / 107) protein is Metacaspase-1A (casA).